Consider the following 384-residue polypeptide: Cobalt-precorrin-5B C(1)-methyltransferase (384 aa).

This sequence belongs to the CbiD family.

It carries out the reaction Co-precorrin-5B + S-adenosyl-L-methionine = Co-precorrin-6A + S-adenosyl-L-homocysteine. It functions in the pathway cofactor biosynthesis; adenosylcobalamin biosynthesis; cob(II)yrinate a,c-diamide from sirohydrochlorin (anaerobic route): step 6/10. Its function is as follows. Catalyzes the methylation of C-1 in cobalt-precorrin-5B to form cobalt-precorrin-6A. In Ruminiclostridium cellulolyticum (strain ATCC 35319 / DSM 5812 / JCM 6584 / H10) (Clostridium cellulolyticum), this protein is Cobalt-precorrin-5B C(1)-methyltransferase.